The chain runs to 809 residues: Protein PHOX3 (809 aa).

Positions 1–22 (MEKQNEEISTDDAETSQSQLVD) are disordered. TPR repeat units lie at residues 126–159 (AQGLKEEGNKLFQKRDYDGAMFKYGEAIKILPKD), 164–199 (SHVRANVASCYMQLEPGEFAKAIHECDLALSVTPDH), 200–233 (NKALLKRARCYEALNKLDLALRDVCMVSKLDPKN), 235–265 (MASEIVEKLKRTLESKGLRINNSVIELPPDY), and 274–311 (AALWAKLGKVRVKKTKKSNQVEEKSEGEGEDVEPEKKN). The segment at 288–339 (TKKSNQVEEKSEGEGEDVEPEKKNNVLAEKGKEKIKMKVKGKQSDKRSDTSK) is disordered. Residue Ser298 is modified to Phosphoserine. Residues 307–339 (PEKKNNVLAEKGKEKIKMKVKGKQSDKRSDTSK) show a composition bias toward basic and acidic residues. Residues 359-438 (NKDVKFVYSD…GTMRFYVVEV (80 aa)) enclose the PB1 domain. 3 TPR repeats span residues 508-541 (SEAMEEVVTSDAAQGPFDRAAQQFQEVAARSLLN), 563-597 (ESVSEQVKTAYECAKKEHANAKEKYEEAMKIKPEC), and 615-648 (SWYYVLVSHLDLKTWPYADVVQFYQSAESNIKKS). The disordered stretch occupies residues 656 to 686 (ETGKESEPSQAGKTDCLTHEKDLGSSTQNNP). Residues 709 to 741 (SIMEYKLDQPFWRESLEAAMEKFELAGTCKDDV) form a TPR 9 repeat.

Functionally, carboxylate clamp type tetratricopeptide repeat protein that may act as a potential Hsp90/Hsp70 co-chaperone. Contributes to polar growth of root hairs. This chain is Protein PHOX3, found in Arabidopsis thaliana (Mouse-ear cress).